The following is a 132-amino-acid chain: Agouti-signaling protein (132 aa).

Positions 1–22 (MDVTRLLLATLLVFLCFFTVYS) are cleaved as a signal peptide. The N-linked (GlcNAc...) asparagine glycan is linked to N39. Residues 62–88 (ISRKEAEKKRSSKKEASMKKVAQPRTP) are disordered. Over residues 63–79 (SRKEAEKKRSSKKEASM) the composition is skewed to basic and acidic residues. 5 disulfides stabilise this stretch: C93–C108, C100–C114, C107–C125, C111–C132, and C116–C123. One can recognise an Agouti domain in the interval 93–132 (CVATRYSCKPPAPACCDPCASCQCRFFRSACSCRVLRLNC).

Its subcellular location is the secreted. In terms of biological role, involved in the regulation of melanogenesis. The binding of ASP to MC1R precludes alpha-MSH initiated signaling and thus blocks production of cAMP, leading to a down-regulation of eumelanogenesis (brown/black pigment) and thus increasing synthesis of pheomelanin (yellow/red pigment). In Semnopithecus entellus (Northern plains gray langur), this protein is Agouti-signaling protein (ASIP).